The primary structure comprises 453 residues: Secreted triacylglycerol lipase LIP3 (453 aa).

A signal peptide spans 1-19; sequence MKLGIVAFTLISFAAQALA. Asn-98 is a glycosylation site (N-linked (GlcNAc...) asparagine). Cys-115 and Cys-284 are joined by a disulfide. Residue Ser-197 is the Nucleophile of the active site. An N-linked (GlcNAc...) asparagine glycan is attached at Asn-230. Active-site residues include Asp-344 and His-378. A disulfide bridge links Cys-360 with Cys-406.

This sequence belongs to the AB hydrolase superfamily. Lipase family. Class Lip subfamily.

It localises to the secreted. The protein resides in the cell wall. It catalyses the reaction a triacylglycerol + H2O = a diacylglycerol + a fatty acid + H(+). The catalysed reaction is a monoacylglycerol + H2O = glycerol + a fatty acid + H(+). It carries out the reaction a diacylglycerol + H2O = a monoacylglycerol + a fatty acid + H(+). In terms of biological role, secreted lipase involved in Dandruff and seborrheic dermatitis (D/SD) probably via lipase-mediated breakdown of sebaceous lipids and release of irritating free fatty acids. Has triacylglycerol lipase activity and is able to hydrolyze triolein, tristearin, trilinolein, tripalmitoylglycerol and trihexadecenoin. Hydrolyzes diacylglycerols such as distearin, dilinolein, dipalmitoylglycerol and dipalmitolein. Mostly converts monoolein to di- and triolein, while free fatty acids are only produced in low amounts. The sequence is that of Secreted triacylglycerol lipase LIP3 from Malassezia globosa (strain ATCC MYA-4612 / CBS 7966) (Dandruff-associated fungus).